The sequence spans 380 residues: MGIKGLTKLLADNAPKAMKEQKFESYFGRRIAVDASMSIYQFLIVVGRTGMETLTNEAGEVTSHLQGMFNRTIRLLEAGIKPVYVFDGKPPDLKKQELAKRYSKREDATKELTEAVEEGDKDAIEKFSKRTVKVTKQHNEECKRLLRLMGVPVVEAPCEAEAECAALCINDMVYAVASEDMDSLTFGAPRFLRHLMDPSSKKIPVMEFEVAKVLEELELTMDQFIDLCILSGCDYCDSIKGIGGQTALKLIRQHGSIESILENINKDRYQIPEDWPYQEARRLFKEPNVTLDIPELKWNAPDEEGLVEFLVKENGFNQDRVTKAIEKIKFAKNKSSQGRLESFFKPVVSTSVPLKRKDTSEKPTKAVANKKTKGAGGKKK.

An N-domain region spans residues 1–105 (MGIKGLTKLL…QELAKRYSKR (105 aa)). A Mg(2+)-binding site is contributed by Asp-34. DNA is bound at residue Arg-71. The Mg(2+) site is built by Asp-87, Glu-159, Glu-161, Asp-180, and Asp-182. An I-domain region spans residues 123–254 (AIEKFSKRTV…QTALKLIRQH (132 aa)). Glu-159 is a DNA binding site. Gly-232 and Asp-234 together coordinate DNA. Asp-234 is a Mg(2+) binding site. The interaction with PCNA stretch occupies residues 336–344 (SQGRLESFF). The tract at residues 351 to 380 (SVPLKRKDTSEKPTKAVANKKTKGAGGKKK) is disordered. Residues 355–364 (KRKDTSEKPT) show a composition bias toward basic and acidic residues. Residues 368-380 (ANKKTKGAGGKKK) show a composition bias toward basic residues.

This sequence belongs to the XPG/RAD2 endonuclease family. FEN1 subfamily. As to quaternary structure, interacts with PCNA. Three molecules of FEN1 bind to one PCNA trimer with each molecule binding to one PCNA monomer. PCNA stimulates the nuclease activity without altering cleavage specificity. Requires Mg(2+) as cofactor. In terms of processing, phosphorylated. Phosphorylation upon DNA damage induces relocalization to the nuclear plasma. As to expression, strongly expressed in proliferating tissues: root and shoot apical meristem, tiller bud, leaf, ligule primordia, marginal meristem of young leaves and panicles. Not expressed in mature leaves when exposed to UV.

The protein localises to the nucleus. It is found in the nucleolus. It localises to the nucleoplasm. The protein resides in the mitochondrion. Its activity is regulated as follows. Inhibited by NaCl. In terms of biological role, structure-specific nuclease with 5'-flap endonuclease and 5'-3' exonuclease activities involved in DNA replication and repair. During DNA replication, cleaves the 5'-overhanging flap structure that is generated by displacement synthesis when DNA polymerase encounters the 5'-end of a downstream Okazaki fragment. It enters the flap from the 5'-end and then tracks to cleave the flap base, leaving a nick for ligation. Also involved in the long patch base excision repair (LP-BER) pathway, by cleaving within the apurinic/apyrimidinic (AP) site-terminated flap. Acts as a genome stabilization factor that prevents flaps from equilibrating into structures that lead to duplications and deletions. Also possesses 5'-3' exonuclease activity on nicked or gapped double-stranded DNA, and exhibits RNase H activity. Also involved in replication and repair of rDNA and in repairing mitochondrial DNA. May be required for cell proliferation. In Oryza sativa subsp. japonica (Rice), this protein is Flap endonuclease 1-A.